The primary structure comprises 122 residues: Small ribosomal subunit protein uS13 (122 aa).

Residues 95-122 (GLPVHGQRTKTNARTRKGPARTVAGKKK) form a disordered region.

This sequence belongs to the universal ribosomal protein uS13 family. In terms of assembly, part of the 30S ribosomal subunit. Forms a loose heterodimer with protein S19. Forms two bridges to the 50S subunit in the 70S ribosome.

Located at the top of the head of the 30S subunit, it contacts several helices of the 16S rRNA. In the 70S ribosome it contacts the 23S rRNA (bridge B1a) and protein L5 of the 50S subunit (bridge B1b), connecting the 2 subunits; these bridges are implicated in subunit movement. Contacts the tRNAs in the A and P-sites. The chain is Small ribosomal subunit protein uS13 from Geotalea uraniireducens (strain Rf4) (Geobacter uraniireducens).